A 65-amino-acid polypeptide reads, in one-letter code: Small ribosomal subunit protein bS21 (65 aa).

Belongs to the bacterial ribosomal protein bS21 family.

In Cytophaga hutchinsonii (strain ATCC 33406 / DSM 1761 / CIP 103989 / NBRC 15051 / NCIMB 9469 / D465), this protein is Small ribosomal subunit protein bS21.